The sequence spans 198 residues: Recombination protein RecR (198 aa).

Residues 57–72 (CSVCGNLTDDDPCLIC) form a C4-type zinc finger. Positions 80-175 (SVILVVEDSK…KVTRLARGLA (96 aa)) constitute a Toprim domain.

It belongs to the RecR family.

In terms of biological role, may play a role in DNA repair. It seems to be involved in an RecBC-independent recombinational process of DNA repair. It may act with RecF and RecO. The chain is Recombination protein RecR from Streptococcus agalactiae serotype Ia (strain ATCC 27591 / A909 / CDC SS700).